Reading from the N-terminus, the 488-residue chain is MRISVGALLGLTALSHATTEKRAASASAYCSNSAGNYKLSSIAAPVQGAGNPGSESTWQLTVDDTSSGHKQTIVGFGAAVTDATVTSFNTLSASVLQDLLNKLMTPAGANFALMRHTIGASDLSGDPAYTYDDNGGKADPSLSGFNLGDRGTAMAKMLATMKSLQPNLKILGSPWSAPGWMKLNGVLDGNTNNNNLNDGYLTSGGTGSTGYASQFAQYFVKYIQAYKNLGAHVDAITIQNEPLFSSAGYPTMYVYDYESAQLIQNYIGPALASAGLDTEIWAYDHNTDVPSYPQTVLNQAGQYVKSVAWHCYAPNVDWTVLSQFHNTNPGVKQYMTECWTPASGAWHQAADFTMGPLQNWASGVAAWTLGTNAQDGPHLSTGGCATCQGLVTINNGGYTLNTAYYMMAQFSKFMPPGAIVLNGSGSYTYSGGGGIQSVASLNPDGTRTVVIENTFGNDVYVTVTMKSGQKWSGNAPSQSVTTWVLPSA.

An N-terminal signal peptide occupies residues 1-17 (MRISVGALLGLTALSHA). The active-site Proton donor is Glu241. The active-site Nucleophile is the Glu337. Residue Asn422 is glycosylated (N-linked (GlcNAc...) asparagine).

The protein belongs to the glycosyl hydrolase 30 family.

It is found in the secreted. The enzyme catalyses Random hydrolysis of (1-&gt;6)-linkages in (1-&gt;6)-beta-D-glucans.. Its function is as follows. Endoglucanase that has highest activity on the linear beta-1,6-glucan pustulan and lower activity against laminarin (beta-1,3-glucans with beta-1,6-branches). Is active on C.albicans cell walls allowing the release of a previously described cell wall proteins. This chain is Endo-1,6-beta-D-glucanase neg1, found in Aspergillus fumigatus (strain ATCC MYA-4609 / CBS 101355 / FGSC A1100 / Af293) (Neosartorya fumigata).